A 287-amino-acid polypeptide reads, in one-letter code: Vesicle-associated protein 4-3 (287 aa).

The segment covering methionine 1–arginine 14 has biased composition (basic and acidic residues). The disordered stretch occupies residues methionine 1–valine 45. Positions serine 25–valine 45 are enriched in low complexity. The MSP domain occupies arginine 99–leucine 221.

It belongs to the VAMP-associated protein (VAP) (TC 9.B.17) family.

May play a role in vesicle trafficking. In Arabidopsis thaliana (Mouse-ear cress), this protein is Vesicle-associated protein 4-3 (PVA43).